Here is a 393-residue protein sequence, read N- to C-terminus: Exosome complex component RRP45 (393 aa).

Positions 1–268 (MRDTPLSNCE…SEITELINKA (268 aa)) are ARE binding.

It belongs to the RNase PH family. In terms of assembly, component of the RNA exosome complex.

It localises to the cytoplasm. The protein localises to the nucleus. It is found in the nucleolus. The protein resides in the nucleoplasm. Non-catalytic component of the RNA exosome complex which has 3'-&gt;5' exoribonuclease activity and participates in a multitude of cellular RNA processing and degradation events. In the nucleus, the RNA exosome complex is involved in proper maturation of stable RNA species such as rRNA, snRNA and snoRNA, in the elimination of RNA processing by-products and non-coding 'pervasive' transcripts, such as antisense RNA species and promoter-upstream transcripts (PROMPTs), and of mRNAs with processing defects, thereby limiting or excluding their export to the cytoplasm. In the cytoplasm, the RNA exosome complex is involved in general mRNA turnover and specifically degrades inherently unstable mRNAs containing AU-rich elements (AREs) within their 3' untranslated regions, and in RNA surveillance pathways, preventing translation of aberrant mRNAs. This chain is Exosome complex component RRP45, found in Danio rerio (Zebrafish).